The primary structure comprises 206 residues: Ribosomal RNA large subunit methyltransferase E (206 aa).

Positions 55, 57, 75, 91, and 116 each coordinate S-adenosyl-L-methionine. The Proton acceptor role is filled by Lys156.

Belongs to the class I-like SAM-binding methyltransferase superfamily. RNA methyltransferase RlmE family.

The protein resides in the cytoplasm. It carries out the reaction uridine(2552) in 23S rRNA + S-adenosyl-L-methionine = 2'-O-methyluridine(2552) in 23S rRNA + S-adenosyl-L-homocysteine + H(+). Its function is as follows. Specifically methylates the uridine in position 2552 of 23S rRNA at the 2'-O position of the ribose in the fully assembled 50S ribosomal subunit. This Blochmanniella floridana protein is Ribosomal RNA large subunit methyltransferase E.